The following is a 73-amino-acid chain: Alternative prion protein (73 aa).

The chain crosses the membrane as a helical span at residues 32–52; it reads WWWLGAASWWWLGAAPWWWLG.

Detected in brain homogenate, primary neurons, and peripheral blood mononuclear cells (at protein level).

Its subcellular location is the mitochondrion outer membrane. The chain is Alternative prion protein (PRNP) from Homo sapiens (Human).